The chain runs to 272 residues: 2-dehydro-3-deoxyphosphooctonate aldolase (272 aa).

The protein belongs to the KdsA family.

The protein resides in the cytoplasm. The enzyme catalyses D-arabinose 5-phosphate + phosphoenolpyruvate + H2O = 3-deoxy-alpha-D-manno-2-octulosonate-8-phosphate + phosphate. It functions in the pathway carbohydrate biosynthesis; 3-deoxy-D-manno-octulosonate biosynthesis; 3-deoxy-D-manno-octulosonate from D-ribulose 5-phosphate: step 2/3. The protein operates within bacterial outer membrane biogenesis; lipopolysaccharide biosynthesis. The protein is 2-dehydro-3-deoxyphosphooctonate aldolase of Geotalea uraniireducens (strain Rf4) (Geobacter uraniireducens).